Here is a 163-residue protein sequence, read N- to C-terminus: Neurotrophin-3 (163 aa).

Residues 1–3 form the signal peptide; the sequence is IQS. The propeptide occupies 4 to 119; the sequence is TSMDQGILTE…VLNRTSRRKR (116 aa). N112 carries an N-linked (GlcNAc...) asparagine glycan. A disordered region spans residues 112 to 132; sequence NRTSRRKREGKSHRGEYSVCD. Residues 123–132 show a composition bias toward basic and acidic residues; it reads SHRGEYSVCD.

This sequence belongs to the NGF-beta family.

It is found in the secreted. Seems to promote the survival of visceral and proprioceptive sensory neurons. The chain is Neurotrophin-3 (NTF3) from Exiliboa placata (Oaxacan dwarf boa).